The chain runs to 515 residues: tRNA pseudouridine synthase Pus10 (515 aa).

Zn(2+) is bound by residues Cys-21 and Cys-24. Positions 42 to 85 (KEVTYELQKYLSHGDPAEENDTPPSKKAKIEEDTSSNEHLGNCE) form a coiled coil. Residues 55–82 (GDPAEENDTPPSKKAKIEEDTSSNEHLG) form a disordered region. The Zn(2+) site is built by Cys-96 and Cys-99. The RNA binding forefinger loop stretch occupies residues 291-304 (TPWIIDGERKIESS). Residue Asp-331 is the Nucleophile of the active site. The interval 428 to 443 (QKTPLRVLHRRPLASR) is RNA binding thumb loop.

This sequence belongs to the pseudouridine synthase Pus10 family.

Its subcellular location is the nucleus. It is found in the cytoplasm. The protein resides in the mitochondrion. It carries out the reaction uridine(55) in tRNA = pseudouridine(55) in tRNA. The enzyme catalyses uridine(54) in tRNA = pseudouridine(54) in tRNA. In terms of biological role, protein with different functions depending on its subcellular location: involved in miRNA processing in the nucleus and acts as a tRNA pseudouridylate synthase in the cytoplasm. In the cytoplasm, acts as a pseudouridylate synthase by catalyzing synthesis of pseudouridine(54) and pseudouridine(55) from uracil-54 and uracil-55, respectively, in the psi GC loop of a subset of tRNAs. tRNA pseudouridylate synthase activity is enhanced by the presence of 1-methyladenosine at position 53-61 of tRNAs. Does not show tRNA pseudouridylate synthase activity in the nucleus. In the nucleus, promotes primary microRNAs (pri-miRNAs) processing independently of its RNA pseudouridylate synthase activity. Binds pri-miRNAs. The protein is tRNA pseudouridine synthase Pus10 of Xenopus laevis (African clawed frog).